A 463-amino-acid chain; its full sequence is Chromosomal replication initiator protein DnaA (463 aa).

Residues M1 to T83 are domain I, interacts with DnaA modulators. The segment at T83–S124 is domain II. A domain III, AAA+ region region spans residues T125–S343. ATP contacts are provided by G171, G173, K174, and T175. The domain IV, binds dsDNA stretch occupies residues N344–N463.

The protein belongs to the DnaA family. As to quaternary structure, oligomerizes as a right-handed, spiral filament on DNA at oriC.

It is found in the cytoplasm. Functionally, plays an essential role in the initiation and regulation of chromosomal replication. ATP-DnaA binds to the origin of replication (oriC) to initiate formation of the DNA replication initiation complex once per cell cycle. Binds the DnaA box (a 9 base pair repeat at the origin) and separates the double-stranded (ds)DNA. Forms a right-handed helical filament on oriC DNA; dsDNA binds to the exterior of the filament while single-stranded (ss)DNA is stabiized in the filament's interior. The ATP-DnaA-oriC complex binds and stabilizes one strand of the AT-rich DNA unwinding element (DUE), permitting loading of DNA polymerase. After initiation quickly degrades to an ADP-DnaA complex that is not apt for DNA replication. Binds acidic phospholipids. This is Chromosomal replication initiator protein DnaA from Rickettsia africae (strain ESF-5).